Reading from the N-terminus, the 186-residue chain is Ribosome maturation factor RimP (186 aa).

It belongs to the RimP family.

The protein localises to the cytoplasm. In terms of biological role, required for maturation of 30S ribosomal subunits. The polypeptide is Ribosome maturation factor RimP (Novosphingobium aromaticivorans (strain ATCC 700278 / DSM 12444 / CCUG 56034 / CIP 105152 / NBRC 16084 / F199)).